The sequence spans 188 residues: MRKSKRERQELLQQTIRTTPFITDEELAEKFNVSIQTIRLDRLELSIPELRERIKSVAEKSLEDEVKSLPLDEVIGEIIDLELDEHAISILEIRREHVFSRNQIARGHHLFAQANSLAVALIDDELALTAKADIRFTRQVKQGERVVAKAKVVKLDKDKGRTVVEVNSYVAEEPVFSGEFVMYRSKQS.

The protein belongs to the FapR family.

Its function is as follows. Transcriptional factor involved in regulation of membrane lipid biosynthesis by repressing genes involved in fatty acid and phospholipid metabolism. The polypeptide is Transcription factor FapR (Bacillus licheniformis (strain ATCC 14580 / DSM 13 / JCM 2505 / CCUG 7422 / NBRC 12200 / NCIMB 9375 / NCTC 10341 / NRRL NRS-1264 / Gibson 46)).